A 334-amino-acid polypeptide reads, in one-letter code: Ornithine carbamoyltransferase (334 aa).

Carbamoyl phosphate is bound by residues 57–60, glutamine 84, arginine 108, and 135–138; these read STRT and HPTQ. L-ornithine contacts are provided by residues asparagine 168, aspartate 233, and 237–238; that span reads SM. Carbamoyl phosphate contacts are provided by residues 275–276 and arginine 320; that span reads CL.

Belongs to the aspartate/ornithine carbamoyltransferase superfamily. OTCase family.

The protein resides in the cytoplasm. It catalyses the reaction carbamoyl phosphate + L-ornithine = L-citrulline + phosphate + H(+). It participates in amino-acid biosynthesis; L-arginine biosynthesis; L-arginine from L-ornithine and carbamoyl phosphate: step 1/3. Functionally, reversibly catalyzes the transfer of the carbamoyl group from carbamoyl phosphate (CP) to the N(epsilon) atom of ornithine (ORN) to produce L-citrulline. The protein is Ornithine carbamoyltransferase of Thermobifida fusca (strain YX).